The primary structure comprises 611 residues: Leukotriene A-4 hydrolase (611 aa).

Lysine 73 carries the post-translational modification N6-acetyllysine. Residues 135 to 137 (QCQ) and 267 to 272 (PYGGME) each bind a peptide. A Zn(2+)-binding site is contributed by histidine 296. Glutamate 297 serves as the catalytic Proton acceptor. 2 residues coordinate Zn(2+): histidine 300 and glutamate 319. The residue at position 337 (lysine 337) is an N6-acetyllysine. Tyrosine 384 acts as the Proton donor in catalysis. Position 414 is an N6-acetyllysine (lysine 414). Serine 416 carries the post-translational modification Phosphoserine. 564–566 (RMK) serves as a coordination point for a peptide. Lysine 573 carries the N6-acetyllysine modification.

Belongs to the peptidase M1 family. In terms of assembly, monomer. It depends on Zn(2+) as a cofactor. Post-translationally, phosphorylation at Ser-416 inhibits leukotriene-A4 hydrolase activity.

It is found in the cytoplasm. The enzyme catalyses leukotriene A4 + H2O = leukotriene B4. It carries out the reaction (5S,6S)-epoxy-(18R)-hydroxy-(7E,9E,11Z,14Z,16E)-eicosapentaenoate + H2O = resolvin E1. The catalysed reaction is (5S,6S)-epoxy-(18S)-hydroxy-(7E,9E,11Z,14Z,16E)-eicosapentaenoate + H2O = 18S-resolvin E1. It catalyses the reaction Release of the N-terminal residue from a tripeptide.. The protein operates within lipid metabolism; leukotriene B4 biosynthesis. Its activity is regulated as follows. Inhibited by bestatin. The epoxide hydrolase activity is restrained by suicide inactivation that involves binding of LTA4 to Tyr-379. 4-(4-benzylphenyl)thiazol-2-amine (ARM1) selectively inhibits the epoxide hydrolase activity. Its function is as follows. Bifunctional zinc metalloenzyme that comprises both epoxide hydrolase (EH) and aminopeptidase activities. Acts as an epoxide hydrolase to catalyze the conversion of LTA4 to the pro-inflammatory mediator leukotriene B4 (LTB4). Also has aminopeptidase activity, with high affinity for N-terminal arginines of various synthetic tripeptides. In addition to its pro-inflammatory EH activity, may also counteract inflammation by its aminopeptidase activity, which inactivates by cleavage another neutrophil attractant, the tripeptide Pro-Gly-Pro (PGP), a bioactive fragment of collagen generated by the action of matrix metalloproteinase-9 (MMP9) and prolylendopeptidase (PREPL). Involved also in the biosynthesis of resolvin E1 and 18S-resolvin E1 from eicosapentaenoic acid, two lipid mediators that show potent anti-inflammatory and pro-resolving actions. The polypeptide is Leukotriene A-4 hydrolase (Lta4h) (Mus musculus (Mouse)).